The primary structure comprises 568 residues: Protein phosphatase 1 regulatory inhibitor subunit 16B (568 aa).

The stretch at 15–55 (EKVPTLERLRAAQKRRAQQLKKWAQYEQDLQHRKRKHERKR) forms a coiled coil. A Phosphoserine modification is found at serine 69. ANK repeat units follow at residues 100-129 (DGLT…NVNA), 133-162 (ELWT…DLLA), 228-257 (QGAT…RVDV), and 261-290 (DGWE…SLSA). The tract at residues 327 to 346 (RHKSSLSRRTSSAGSRGKVV) is disordered. Residues serine 333, serine 337, and serine 350 each carry the phosphoserine modification. The segment covering 333 to 342 (SRRTSSAGSR) has biased composition (low complexity). Residues 373-404 (SASEDQRNSTYNGDIRETRTDQENKDPNPRLE) are disordered. Basic and acidic residues predominate over residues 386–404 (DIRETRTDQENKDPNPRLE). Serine 477 carries the phosphoserine modification. The segment at 504 to 525 (GSGVSRTGEGSSEGKAPLIGGR) is disordered. One copy of the ANK 5 repeat lies at 531-560 (SNGTSVYYTVTSGDPPLLKFKAPIEEMEEK). Cysteine 564 carries the S-palmitoyl cysteine lipid modification. Position 565 is a cysteine methyl ester (cysteine 565). Cysteine 565 is lipidated: S-farnesyl cysteine. Residues 566–568 (RIS) constitute a propeptide, removed in mature form.

Interacts with PPP1CA, PPP1CB and MSN. Interacts (via its fourth ankyrin repeat) with the mature dimeric form of RPSA/LAMR1. Interacts with EEF1A1. Interacts with PTEN. Interacts with ECE1. Phosphorylated by PKA and, after PKA priming, by GSK3B. Phosphorylation by GSK3B reduces its association with PP1C and enhances PP1C activity. Dephosphorylation by its associated PP1C results in enhanced association with PP1C, but reduced PP1C activity.

The protein localises to the cell membrane. It is found in the nucleus. The protein resides in the cell projection. Functionally, regulator of protein phosphatase 1 (PP1) that acts as a positive regulator of pulmonary endothelial cell (EC) barrier function. Protects the endothelial barrier from lipopolysaccharide (LPS)-induced vascular leakage. Involved in the regulation of the PI3K/AKT signaling pathway. Involved in the regulation of angiogenesis and endothelial cell proliferation through the control of ECE1 dephosphorylation, trafficking and activity. Involved in the regulation of endothelial cell filopodia extension. May be a downstream target for TGF-beta1 signaling cascade in endothelial cells. Involved in PKA-mediated moesin dephosphorylation which is important in EC barrier protection against thrombin stimulation. Promotes the interaction of PPP1CA with RPSA/LAMR1 and in turn facilitates the dephosphorylation of RPSA/LAMR1. Involved in the dephosphorylation of EEF1A1. The sequence is that of Protein phosphatase 1 regulatory inhibitor subunit 16B (PPP1R16B) from Bos taurus (Bovine).